Consider the following 663-residue polypeptide: MDSHVLAFPIPDPSTPPPEEASLYASKCDYYESDIYSQIRRLTEEKCIETEKELPVNIKLHVKHKGMSISSSRNELVVTVSGNYKNVYTAKIKILQAIPKILISKLVLEEPLENLLFDEDGYVYEDTMKHLDKITEITGAKIYIMHRSMCHDIDFQLRTDSGFSNRLNEQQSFYQRHLESTRHEFSCQKNAENSFFIVFYGDYCSVEHARIRVLALMDEIRGLSVVAIATSVSFQPILVGKAFSSTAGMKATESINIYTLPFCSDSIPRLQTLPALNSSKIIITGEEEKLQRLEEAFYYAEEHLKLFTHVTEISFVKLFEFLAYEMDELRLIMEENSSFIRFPEYFKEGGETSPENSKVKIYSSSIANSEKTALRLAKLASKYVQGKTQFGVEDNEDFLRVAGSWRRASTIEKGVSSSELSSIVSSTGSIVETNGIGEKMSFSPLKKLSIPPTEFVAQIAIICMASGVEMLLKTNGIEYFGQENTVPIAMDKASKIFYKFGQSQWHQILLEAPTKDQDFISGKKNGKLDKVKQQCRFNLKNGDILFCPQSTSIFTVDIYSDELERVIKGMNTMLLEFPAEMHFYVPEEIHKKLIGFRGEQIQRVTKLYNSYIEFSTTPFDCYGHNVLIRTPSKFSENLWAVRSLFIKTAEGLGYDIPKYLFAN.

The KH domain occupies 578-644 (PAEMHFYVPE…SENLWAVRSL (67 aa)).

It localises to the cytoplasm. Its subcellular location is the nucleus. The protein localises to the cytoskeleton. It is found in the microtubule organizing center. The protein resides in the spindle pole body. Functionally, has a role in meiosis. The sequence is that of Meiotically up-regulated gene 60 protein (mug60) from Schizosaccharomyces pombe (strain 972 / ATCC 24843) (Fission yeast).